The primary structure comprises 376 residues: Queuine tRNA-ribosyltransferase (376 aa).

Catalysis depends on Asp-92, which acts as the Proton acceptor. Substrate-binding positions include 92–96 (DSGGF), Asp-146, Gln-190, and Gly-217. Residues 248–254 (GVGRPED) form an RNA binding region. Asp-267 acts as the Nucleophile in catalysis. An RNA binding; important for wobble base 34 recognition region spans residues 272 to 276 (TRNAR). Residues Cys-305, Cys-307, Cys-310, and His-337 each coordinate Zn(2+).

Belongs to the queuine tRNA-ribosyltransferase family. As to quaternary structure, homodimer. Within each dimer, one monomer is responsible for RNA recognition and catalysis, while the other monomer binds to the replacement base PreQ1. The cofactor is Zn(2+).

The catalysed reaction is 7-aminomethyl-7-carbaguanine + guanosine(34) in tRNA = 7-aminomethyl-7-carbaguanosine(34) in tRNA + guanine. Its pathway is tRNA modification; tRNA-queuosine biosynthesis. In terms of biological role, catalyzes the base-exchange of a guanine (G) residue with the queuine precursor 7-aminomethyl-7-deazaguanine (PreQ1) at position 34 (anticodon wobble position) in tRNAs with GU(N) anticodons (tRNA-Asp, -Asn, -His and -Tyr). Catalysis occurs through a double-displacement mechanism. The nucleophile active site attacks the C1' of nucleotide 34 to detach the guanine base from the RNA, forming a covalent enzyme-RNA intermediate. The proton acceptor active site deprotonates the incoming PreQ1, allowing a nucleophilic attack on the C1' of the ribose to form the product. After dissociation, two additional enzymatic reactions on the tRNA convert PreQ1 to queuine (Q), resulting in the hypermodified nucleoside queuosine (7-(((4,5-cis-dihydroxy-2-cyclopenten-1-yl)amino)methyl)-7-deazaguanosine). The polypeptide is Queuine tRNA-ribosyltransferase (Stenotrophomonas maltophilia (strain K279a)).